The primary structure comprises 283 residues: ATP phosphoribosyltransferase (283 aa).

Belongs to the ATP phosphoribosyltransferase family. Long subfamily. Mg(2+) serves as cofactor.

It localises to the cytoplasm. The enzyme catalyses 1-(5-phospho-beta-D-ribosyl)-ATP + diphosphate = 5-phospho-alpha-D-ribose 1-diphosphate + ATP. The protein operates within amino-acid biosynthesis; L-histidine biosynthesis; L-histidine from 5-phospho-alpha-D-ribose 1-diphosphate: step 1/9. With respect to regulation, feedback inhibited by histidine. Its function is as follows. Catalyzes the condensation of ATP and 5-phosphoribose 1-diphosphate to form N'-(5'-phosphoribosyl)-ATP (PR-ATP). Has a crucial role in the pathway because the rate of histidine biosynthesis seems to be controlled primarily by regulation of HisG enzymatic activity. The protein is ATP phosphoribosyltransferase of Ignicoccus hospitalis (strain KIN4/I / DSM 18386 / JCM 14125).